The sequence spans 371 residues: Ferrochelatase (371 aa).

Positions 218 and 299 each coordinate Fe cation.

Belongs to the ferrochelatase family.

It localises to the cytoplasm. The enzyme catalyses heme b + 2 H(+) = protoporphyrin IX + Fe(2+). It functions in the pathway porphyrin-containing compound metabolism; protoheme biosynthesis; protoheme from protoporphyrin-IX: step 1/1. In terms of biological role, catalyzes the ferrous insertion into protoporphyrin IX. This chain is Ferrochelatase, found in Cupriavidus pinatubonensis (strain JMP 134 / LMG 1197) (Cupriavidus necator (strain JMP 134)).